A 369-amino-acid chain; its full sequence is Methylthioribose-1-phosphate isomerase (369 aa).

Met-1 is subject to N-acetylmethionine. Arg-158 carries the post-translational modification Omega-N-methylarginine. The Proton donor role is filled by Asp-248. At Ser-366 the chain carries Phosphoserine.

This sequence belongs to the eIF-2B alpha/beta/delta subunits family. MtnA subfamily.

It is found in the cytoplasm. The protein localises to the nucleus. It carries out the reaction 5-(methylsulfanyl)-alpha-D-ribose 1-phosphate = 5-(methylsulfanyl)-D-ribulose 1-phosphate. It participates in amino-acid biosynthesis; L-methionine biosynthesis via salvage pathway; L-methionine from S-methyl-5-thio-alpha-D-ribose 1-phosphate: step 1/6. Functionally, catalyzes the interconversion of methylthioribose-1-phosphate (MTR-1-P) into methylthioribulose-1-phosphate (MTRu-1-P). This is Methylthioribose-1-phosphate isomerase (Mri1) from Rattus norvegicus (Rat).